A 691-amino-acid polypeptide reads, in one-letter code: Elongation factor G (691 aa).

A tr-type G domain is found at Glu8–Val282. Residues Ala17–Thr24, Asp81–His85, and Asn135–Asp138 each bind GTP.

Belongs to the TRAFAC class translation factor GTPase superfamily. Classic translation factor GTPase family. EF-G/EF-2 subfamily.

It localises to the cytoplasm. Its function is as follows. Catalyzes the GTP-dependent ribosomal translocation step during translation elongation. During this step, the ribosome changes from the pre-translocational (PRE) to the post-translocational (POST) state as the newly formed A-site-bound peptidyl-tRNA and P-site-bound deacylated tRNA move to the P and E sites, respectively. Catalyzes the coordinated movement of the two tRNA molecules, the mRNA and conformational changes in the ribosome. This Caldicellulosiruptor saccharolyticus (strain ATCC 43494 / DSM 8903 / Tp8T 6331) protein is Elongation factor G.